A 179-amino-acid chain; its full sequence is Alkyl hydroperoxide reductase AhpD (179 aa).

Catalysis depends on cysteine 130, which acts as the Proton donor. Cysteine 130 and cysteine 133 are disulfide-bonded. The active-site Cysteine sulfenic acid (-SOH) intermediate is cysteine 133.

Belongs to the AhpD family. In terms of assembly, homotrimer.

It catalyses the reaction N(6)-[(R)-dihydrolipoyl]-L-lysyl-[lipoyl-carrier protein] + a hydroperoxide = N(6)-[(R)-lipoyl]-L-lysyl-[lipoyl-carrier protein] + an alcohol + H2O. Functionally, antioxidant protein with alkyl hydroperoxidase activity. Required for the reduction of the AhpC active site cysteine residues and for the regeneration of the AhpC enzyme activity. The chain is Alkyl hydroperoxide reductase AhpD from Rhodococcus erythropolis (strain PR4 / NBRC 100887).